The primary structure comprises 622 residues: MALLQISEPGQSPDPHQRRIAVGIDLGTTHSLVAAVRNGVAECLPDDQGRVLLPSVVRYLPQGRREIGHAAQAALSTDAGNTIASAKRFMGRTLADIDAPEKLPYRFAEQEAGRGVIGIETVDGTKTAVEVSAEILATLRFRAEDTFNDDIHGAVITVPAYFDDAQRQATKDAAKLAGINLLRLINEPTAAAIAYGLDNGSEGVYAVYDLGGGTFDISILRLSQGVFEVVSTGGDSALGGDDYDAALAEWVAQQTGVVPQTAEDKARWRMAARLCKQALTDAQVATLTAELSTGAVHFDVKRSDFDASTAHLTARSLAAVRRALKDAGLARDEVQGVVLVGGSTRMPQVREAVAEFFGRDPLINLNPDEVVALGAAIQANQLAGNSSSGDMLLLDVIPLSLGVETMGGLVERIISRNETIPTARAQDFTTYKDGQTALAVHVVQGERDLVADCRSLARFELRGIPPMAAGAARIRVTFTVDADGLLSVGAKEQTSGVEAHIHVKPSYGLSDDEVARMLQDGFATAQQDMQARALVEARVDADRMLMATESALQADGDVLAADQRAAIDALIDALRASVGSEDAAVIEAATQALAKGTESFAAERMNRSIQQALAGKSVQSLS.

This sequence belongs to the heat shock protein 70 family.

Functionally, chaperone involved in the maturation of iron-sulfur cluster-containing proteins. Has a low intrinsic ATPase activity which is markedly stimulated by HscB. The sequence is that of Chaperone protein HscA homolog from Delftia acidovorans (strain DSM 14801 / SPH-1).